The chain runs to 1639 residues: RIMS-binding protein 3A (1639 aa).

Disordered regions lie at residues 1 to 22, 215 to 240, and 295 to 364; these read MAKD…SSPA, GSPD…CHAP, and SLDS…LTPS. A coiled-coil region spans residues 21 to 143; the sequence is PAAAVLENQR…ELQRQLAEEL (123 aa). Residues 326–339 show a composition bias toward pro residues; sequence SPPPSPLPPPPPPS. 2 coiled-coil regions span residues 409–442 and 480–619; these read QADE…QETN and LAKD…AEEN. The segment at 697–811 is disordered; sequence CRPGHPPEQP…DRDTASEVDD (115 aa). Polar residues-rich tracts occupy residues 707 to 718 and 761 to 775; these read WETSQMPESQVK and SVPQ…SQPL. The segment covering 776–790 has biased composition (low complexity); sequence SKKTSSQSNSSSEGS. One can recognise an SH3 1 domain in the interval 832-899; that stretch reads PKLKIFMAQY…PSNFVEQIPD (68 aa). 2 Fibronectin type-III domains span residues 995–1083 and 1088–1184; these read APMQ…TLLA and PPLD…IPED. Disordered stretches follow at residues 1251–1273 and 1292–1330; these read PRRQ…GAGS and QKSP…FIHL. Residues 1293–1305 are compositionally biased toward polar residues; sequence KSPQNHRPPSVSD. SH3 domains lie at 1452 to 1520 and 1569 to 1636; these read TPAR…EMEV and WTPK…HMSL.

Belongs to the RIMBP family. Interacts with LRGUK (via guanylate kinase-like domain). Interacts (via C-terminus) with HOOK1 (via coiled-coil region).

The protein resides in the cytoplasm. It is found in the cytoskeleton. In terms of biological role, probable component of the manchette, a microtubule-based structure which plays a key role in sperm head morphogenesis during late stages of sperm development. This chain is RIMS-binding protein 3A (RIMBP3), found in Homo sapiens (Human).